We begin with the raw amino-acid sequence, 293 residues long: Ribosomal protein L11 methyltransferase (293 aa).

Residues Thr-145, Gly-166, Asp-188, and Asn-230 each coordinate S-adenosyl-L-methionine.

Belongs to the methyltransferase superfamily. PrmA family.

It is found in the cytoplasm. The catalysed reaction is L-lysyl-[protein] + 3 S-adenosyl-L-methionine = N(6),N(6),N(6)-trimethyl-L-lysyl-[protein] + 3 S-adenosyl-L-homocysteine + 3 H(+). Its function is as follows. Methylates ribosomal protein L11. In Actinobacillus succinogenes (strain ATCC 55618 / DSM 22257 / CCUG 43843 / 130Z), this protein is Ribosomal protein L11 methyltransferase.